The sequence spans 71 residues: Long neurotoxin 5 (71 aa).

Intrachain disulfides connect C3–C20, C14–C41, C26–C30, C45–C56, and C57–C62.

This sequence belongs to the three-finger toxin family. Long-chain subfamily. Type II alpha-neurotoxin sub-subfamily. In terms of tissue distribution, expressed by the venom gland.

It localises to the secreted. Binds with high affinity to muscular (alpha-1/CHRNA1) and neuronal (alpha-7/CHRNA7) nicotinic acetylcholine receptor (nAChR) and inhibits acetylcholine from binding to the receptor, thereby impairing neuromuscular and neuronal transmission. The chain is Long neurotoxin 5 from Naja naja (Indian cobra).